Reading from the N-terminus, the 485-residue chain is Phosphoglucosamine mutase (485 aa).

Catalysis depends on serine 133, which acts as the Phosphoserine intermediate. Positions 133, 274, 276, and 278 each coordinate Mg(2+). Serine 133 carries the post-translational modification Phosphoserine.

It belongs to the phosphohexose mutase family. The cofactor is Mg(2+). Activated by phosphorylation.

The catalysed reaction is alpha-D-glucosamine 1-phosphate = D-glucosamine 6-phosphate. In terms of biological role, catalyzes the conversion of glucosamine-6-phosphate to glucosamine-1-phosphate. The protein is Phosphoglucosamine mutase of Rippkaea orientalis (strain PCC 8801 / RF-1) (Cyanothece sp. (strain PCC 8801)).